The chain runs to 87 residues: U14-lycotoxin-Ls1b (87 aa).

Residues 1–20 form the signal peptide; sequence MNSKVFAVLLLLALSTCVLS. Residues 21-66 enclose the WAP domain; sequence EKYCPTPRNTSCKKMNIRNNCCRDSDCTSNAFCCAEPCGNFCHKAS. Cystine bridges form between C24–C54, C32–C58, C41–C53, C42–C80, and C47–C62.

This sequence belongs to the venom protein 11 family. 01 (wap-1) subfamily. In terms of processing, contains 5 disulfide bonds. As to expression, expressed by the venom gland.

The protein resides in the secreted. Functionally, has antibacterial activity. In Lycosa singoriensis (Wolf spider), this protein is U14-lycotoxin-Ls1b.